Consider the following 243-residue polypeptide: MTDIQDVISPKLAVAIANPIFPAVDSLLRSGRHISTEHLDNHAFLMDFQNELDGFYRRYNVELIRAPEGFFYLRPKATTLIARSVLSELEMLVGKVLCYLYLSPERLAQQGIFSTQEVYDELLNLADEGKLLKAVNQRSSGSDLDKQKLAEKVRAAIGRLRRLGMIQTVGEQNSGKFTISESVFRFGAEVRSGDDPLESQARLIRDGEAATPDSLALEKQAQLMENDTKSADEIDEEFDGEQE.

The segment at 223–243 (LMENDTKSADEIDEEFDGEQE) is disordered. A compositionally biased stretch (acidic residues) spans 233-243 (EIDEEFDGEQE).

This sequence belongs to the MukE family. In terms of assembly, interacts, and probably forms a ternary complex, with MukF and MukB. The complex formation is stimulated by calcium or magnesium.

It localises to the cytoplasm. It is found in the nucleoid. Involved in chromosome condensation, segregation and cell cycle progression. May participate in facilitating chromosome segregation by condensation DNA from both sides of a centrally located replisome during cell division. Probably acts via its interaction with MukB and MukF. The protein is Chromosome partition protein MukE of Haemophilus influenzae (strain ATCC 51907 / DSM 11121 / KW20 / Rd).